The sequence spans 338 residues: Dodecaprenyl-phosphate galacturonate synthase (338 aa).

2 helical membrane-spanning segments follow: residues 254-274 (FFGSLGLGLGALAMLILLYLG) and 289-309 (MLMVGVVLLLSSVQMITTGIL).

This sequence belongs to the glycosyltransferase 2 family.

It localises to the cell membrane. The catalysed reaction is di-trans,nona-cis-dodecaprenyl phosphate + UDP-alpha-D-galacturonate = beta-D-galacturonosyl di-trans,nona-cis-dodecaprenyl phosphate + UDP. Functionally, glycosyltransferase that catalyzes the synthesis of dodecaprenyl-phosphate galacturonate (Dod-P-GalA), likely from UDP-GalA and dodecaprenyl-phosphate. Dod-P-GalA is the lipid donor required for GalA transfer to lipopolysaccharide (LPS) specific residues catalyzed by the GalA transferases RgtA, RgtB, RgtC and RgtD. The sequence is that of Dodecaprenyl-phosphate galacturonate synthase from Rhizobium johnstonii (strain DSM 114642 / LMG 32736 / 3841) (Rhizobium leguminosarum bv. viciae).